The following is a 93-amino-acid chain: Large ribosomal subunit protein uL23cz/uL23cy (93 aa).

This sequence belongs to the universal ribosomal protein uL23 family. As to quaternary structure, part of the 50S ribosomal subunit.

It is found in the plastid. The protein localises to the chloroplast. Binds to 23S rRNA. The polypeptide is Large ribosomal subunit protein uL23cz/uL23cy (rpl23-A) (Jasminum nudiflorum (Winter jasmine)).